A 435-amino-acid chain; its full sequence is Adenylosuccinate synthetase (435 aa).

GTP contacts are provided by residues 20 to 26 (GDEGKGK) and 48 to 50 (GHT). The active-site Proton acceptor is the aspartate 21. Residues aspartate 21 and glycine 48 each contribute to the Mg(2+) site. Residues 21–24 (DEGK), 46–49 (NAGH), threonine 134, arginine 148, glutamine 229, threonine 244, and arginine 308 each bind IMP. Residue histidine 49 is the Proton donor of the active site. Substrate is bound at residue 304-310 (TTTGRPR). Residues arginine 310, 336-338 (KVD), and 422-424 (SMG) each bind GTP.

Belongs to the adenylosuccinate synthetase family. As to quaternary structure, homodimer. Requires Mg(2+) as cofactor.

It is found in the cytoplasm. It catalyses the reaction IMP + L-aspartate + GTP = N(6)-(1,2-dicarboxyethyl)-AMP + GDP + phosphate + 2 H(+). The protein operates within purine metabolism; AMP biosynthesis via de novo pathway; AMP from IMP: step 1/2. Plays an important role in the de novo pathway of purine nucleotide biosynthesis. Catalyzes the first committed step in the biosynthesis of AMP from IMP. The protein is Adenylosuccinate synthetase of Thermoplasma acidophilum (strain ATCC 25905 / DSM 1728 / JCM 9062 / NBRC 15155 / AMRC-C165).